Consider the following 382-residue polypeptide: Protein shisa-9A (382 aa).

The first 26 residues, 1–26 (MKWTVLLLEYFLVKVLVLLYSADGEA), serve as a signal peptide directing secretion. Residues 27 to 132 (QQLEGFIMLS…DPRHDPTKDK (106 aa)) are Extracellular-facing. Asn-39 is a glycosylation site (N-linked (GlcNAc...) asparagine). A helical membrane pass occupies residues 133–153 (TNLIVYIICGVVAIMALVGIF). The Cytoplasmic portion of the chain corresponds to 154–382 (TKLGLEKAHR…VTNSKAEVTV (229 aa)).

It belongs to the shisa family. SHISA9 subfamily. Component of some AMPA receptors (ionotropic glutamate receptors) complex.

The protein localises to the cell projection. It localises to the dendritic spine membrane. Its subcellular location is the synapse. Its function is as follows. Regulator of short-term neuronal synaptic plasticity in the dentate gyrus. Associates with AMPA receptors (ionotropic glutamate receptors) in synaptic spines and promotes AMPA receptor desensitization at excitatory synapses. In Danio rerio (Zebrafish), this protein is Protein shisa-9A (shisa9a).